A 355-amino-acid chain; its full sequence is Alanine racemase (355 aa).

The active-site Proton acceptor; specific for D-alanine is lysine 34. Lysine 34 is subject to N6-(pyridoxal phosphate)lysine. Arginine 133 contributes to the substrate binding site. The active-site Proton acceptor; specific for L-alanine is tyrosine 249. Substrate is bound at residue methionine 297.

This sequence belongs to the alanine racemase family. The cofactor is pyridoxal 5'-phosphate.

The enzyme catalyses L-alanine = D-alanine. It participates in amino-acid biosynthesis; D-alanine biosynthesis; D-alanine from L-alanine: step 1/1. Its function is as follows. Catalyzes the interconversion of L-alanine and D-alanine. May also act on other amino acids. The protein is Alanine racemase (alr) of Rickettsia akari (strain Hartford).